The chain runs to 116 residues: Ig heavy chain V region 1B43 (116 aa).

The signal sequence occupies residues methionine 1–serine 18. The tract at residues aspartate 19 to threonine 48 is framework-1. A disulfide bridge connects residues cysteine 40 and cysteine 114. The tract at residues serine 49–tryptophan 53 is complementarity-determining-1. The interval histidine 54 to methionine 67 is framework-2. Positions glycine 68–serine 84 are complementarity-determining-2. Residues arginine 85–arginine 116 are framework-3.

The chain is Ig heavy chain V region 1B43 from Mus musculus (Mouse).